We begin with the raw amino-acid sequence, 331 residues long: Peroxidase 69 (331 aa).

Positions 1-23 (MGRGYNLLFVLVTFLVLVAAVTA) are cleaved as a signal peptide. Intrachain disulfides connect Cys46-Cys122, Cys79-Cys84, Cys128-Cys327, and Cys205-Cys237. His77 serves as the catalytic Proton acceptor. Ca(2+) contacts are provided by Asp78, Val81, Gly83, Asp85, and Ser87. An N-linked (GlcNAc...) asparagine glycan is attached at Asn93. Residue Pro168 coordinates substrate. His198 is a binding site for heme b. A Ca(2+)-binding site is contributed by Thr199. N-linked (GlcNAc...) asparagine glycosylation is present at Asn216. Ca(2+) contacts are provided by Asp248, Ser251, and Asp256.

It belongs to the peroxidase family. Classical plant (class III) peroxidase subfamily. It depends on heme b as a cofactor. Ca(2+) is required as a cofactor. In terms of tissue distribution, mainly expressed in roots and slightly in leaves.

It is found in the secreted. The enzyme catalyses 2 a phenolic donor + H2O2 = 2 a phenolic radical donor + 2 H2O. Removal of H(2)O(2), oxidation of toxic reductants, biosynthesis and degradation of lignin, suberization, auxin catabolism, response to environmental stresses such as wounding, pathogen attack and oxidative stress. These functions might be dependent on each isozyme/isoform in each plant tissue. The sequence is that of Peroxidase 69 (PER69) from Arabidopsis thaliana (Mouse-ear cress).